Reading from the N-terminus, the 395-residue chain is Phosphoglycerate kinase (395 aa).

Substrate contacts are provided by residues 21–23 (DLN), Arg36, 59–62 (HLGR), Arg113, and Arg146. ATP is bound by residues Lys197, Glu324, and 350–353 (GGDT).

It belongs to the phosphoglycerate kinase family. In terms of assembly, monomer.

It is found in the cytoplasm. It carries out the reaction (2R)-3-phosphoglycerate + ATP = (2R)-3-phospho-glyceroyl phosphate + ADP. The protein operates within carbohydrate degradation; glycolysis; pyruvate from D-glyceraldehyde 3-phosphate: step 2/5. This is Phosphoglycerate kinase from Acinetobacter baumannii (strain AB307-0294).